We begin with the raw amino-acid sequence, 413 residues long: MKQYKILLFIADGLGDRPVTKLEHKTPLEAVEKPNIGELLKNSIAGLMDPISPGIVPGSDTSHLAIFGIDPFKYYRGRGAFEAIGAGARLKAGDVAFRGNFATVDNNLTVIDRRAGRKVDEAKDLVQELNSKIGEIDGVQVKFYHGTEHRVAVVLSGKGLSDKISDTDPHETGVKVKKSEATDDTREAKITAEVLNKLTNRIYDILSSSELNKKRIERGELPANIVLLRGAAQYVDLPKFYDYTKINAAAVSATALIKGICSQIGMNVVTPKGATGGLDTNYIGKAEEASKLLKEYDMVFLHLKATDAASHDGNIDGKLYAISMIDKMIGRVLDIYGSELIIAITGDHATPVEVKEHTGDPVPFLLYVPYNIVADNVDDFNEKQLRKGSLRIKGLDVINLLLNYSYRYEKFGA.

The protein belongs to the BPG-independent phosphoglycerate mutase family. A-PGAM subfamily.

The catalysed reaction is (2R)-2-phosphoglycerate = (2R)-3-phosphoglycerate. Its pathway is carbohydrate degradation; glycolysis; pyruvate from D-glyceraldehyde 3-phosphate: step 3/5. Its function is as follows. Catalyzes the interconversion of 2-phosphoglycerate and 3-phosphoglycerate. The chain is 2,3-bisphosphoglycerate-independent phosphoglycerate mutase from Sulfolobus acidocaldarius (strain ATCC 33909 / DSM 639 / JCM 8929 / NBRC 15157 / NCIMB 11770).